A 428-amino-acid polypeptide reads, in one-letter code: Histidinol dehydrogenase (428 aa).

Substrate contacts are provided by S234, Q256, and H259. 2 residues coordinate Zn(2+): Q256 and H259. Residues E323 and H324 each act as proton acceptor in the active site. Positions 324, 357, 411, and 416 each coordinate substrate. Zn(2+) is bound at residue D357. H416 contributes to the Zn(2+) binding site.

It belongs to the histidinol dehydrogenase family. Requires Zn(2+) as cofactor.

It catalyses the reaction L-histidinol + 2 NAD(+) + H2O = L-histidine + 2 NADH + 3 H(+). The protein operates within amino-acid biosynthesis; L-histidine biosynthesis; L-histidine from 5-phospho-alpha-D-ribose 1-diphosphate: step 9/9. Functionally, catalyzes the sequential NAD-dependent oxidations of L-histidinol to L-histidinaldehyde and then to L-histidine. The protein is Histidinol dehydrogenase of Campylobacter jejuni subsp. jejuni serotype O:2 (strain ATCC 700819 / NCTC 11168).